We begin with the raw amino-acid sequence, 362 residues long: Beta-ketoacyl-[acyl-carrier-protein] synthase III 2 (362 aa).

Residues Cys113 and His251 contribute to the active site. Residues 252–256 (QANIR) form an ACP-binding region. The active site involves Asn281.

It belongs to the thiolase-like superfamily. FabH family. As to quaternary structure, homodimer.

It is found in the cytoplasm. The catalysed reaction is malonyl-[ACP] + acetyl-CoA + H(+) = 3-oxobutanoyl-[ACP] + CO2 + CoA. The protein operates within lipid metabolism; fatty acid biosynthesis. Its function is as follows. Catalyzes the condensation reaction of fatty acid synthesis by the addition to an acyl acceptor of two carbons from malonyl-ACP. Catalyzes the first condensation reaction which initiates fatty acid synthesis and may therefore play a role in governing the total rate of fatty acid production. Possesses both acetoacetyl-ACP synthase and acetyl transacylase activities. Its substrate specificity determines the biosynthesis of branched-chain and/or straight-chain of fatty acids. This chain is Beta-ketoacyl-[acyl-carrier-protein] synthase III 2, found in Vibrio vulnificus (strain YJ016).